The following is a 1190-amino-acid chain: Wings apart-like protein homolog (1190 aa).

Disordered stretches follow at residues Met-1–Val-23 and Gln-46–Leu-82. Residues Met-1–Glu-659 are mediates interaction with the cohesin complex. A compositionally biased stretch (basic and acidic residues) spans Asp-54–Glu-66. The FGF motif 1 motif lies at Phe-73–Phe-75. Residue Ser-77 is modified to Phosphoserine. Position 168 is an N6-acetyllysine (Lys-168). 3 positions are modified to phosphoserine: Ser-221, Ser-223, and Ser-226. Residues Leu-260 to Ser-286 adopt a coiled-coil conformation. Phosphoserine occurs at positions 347 and 380. An FGF motif 2 motif is present at residues Phe-429–Phe-431. Position 443 is a phosphoserine (Ser-443). The short motif at Phe-453–Phe-455 is the FGF motif 3 element. Phosphoserine occurs at positions 459 and 461. Residues Ser-459 to Cys-469 show a composition bias toward acidic residues. The segment at Ser-459–Ala-553 is disordered. Residues Ser-494–Glu-509 are compositionally biased toward polar residues. Residues Gln-531 to Arg-540 are compositionally biased toward basic and acidic residues. Residues Arg-626–Thr-1169 form the WAPL domain. Residues Glu-749–Lys-782 are a coiled coil. Residue Ser-904 is modified to Phosphoserine.

It belongs to the WAPL family. Interacts with the cohesin complex throughout the cell cycle; interacts with both chromatin-bound and soluble pools of the complex. Interacts with RAD21; the interaction is direct. Interacts with PDS5A; the interaction is direct, cohesin-dependent and competitive with CDCA5/SORORIN. Interacts (via FGF motifs) with PDS5B; the interaction is direct. Interacts with a SMC1 protein (SMC1A or SMC1B) and SMC3. In terms of assembly, (Microbial infection) Isoform 2 interacts with Epstein-Barr virus EBNA2. Deubiquitinated by USP37; leading to stabilization. Isoform 1 is highly expressed in uterine cervix tumor. Isoform 2 is widely expressed with a high level in skeletal muscle and heart.

It localises to the nucleus. Its subcellular location is the chromosome. It is found in the cytoplasm. In terms of biological role, regulator of sister chromatid cohesion in mitosis which negatively regulates cohesin association with chromatin. Involved in both sister chromatid cohesion during interphase and sister-chromatid resolution during early stages of mitosis. Couples DNA replication to sister chromatid cohesion. Cohesion ensures that chromosome partitioning is accurate in both meiotic and mitotic cells and plays an important role in DNA repair. The sequence is that of Wings apart-like protein homolog from Homo sapiens (Human).